The chain runs to 347 residues: S-adenosylmethionine:tRNA ribosyltransferase-isomerase (347 aa).

The protein belongs to the QueA family. Monomer.

It localises to the cytoplasm. It carries out the reaction 7-aminomethyl-7-carbaguanosine(34) in tRNA + S-adenosyl-L-methionine = epoxyqueuosine(34) in tRNA + adenine + L-methionine + 2 H(+). Its pathway is tRNA modification; tRNA-queuosine biosynthesis. Transfers and isomerizes the ribose moiety from AdoMet to the 7-aminomethyl group of 7-deazaguanine (preQ1-tRNA) to give epoxyqueuosine (oQ-tRNA). This Xylella fastidiosa (strain 9a5c) protein is S-adenosylmethionine:tRNA ribosyltransferase-isomerase.